The primary structure comprises 345 residues: Molybdate/tungstate import ATP-binding protein WtpC (345 aa).

In terms of domain architecture, ABC transporter spans 2–231; the sequence is LKVESISKDY…PKSEEVARFL (230 aa). An ATP-binding site is contributed by 33 to 40; the sequence is GPSGSGKT. The region spanning 280-345 is the Mop domain; sequence KTSARNVFKA…FKASAIHVFP (66 aa).

This sequence belongs to the ABC transporter superfamily. Sulfate/tungstate importer (TC 3.A.1.6) family. The complex is composed of two ATP-binding proteins (WtpC), two transmembrane proteins (WtpB) and a solute-binding protein (WtpA).

It is found in the cell membrane. The enzyme catalyses tungstate(in) + ATP + H2O = tungstate(out) + ADP + phosphate + H(+). In terms of biological role, part of the ABC transporter complex WtpABC involved in molybdate/tungstate import. Responsible for energy coupling to the transport system. The chain is Molybdate/tungstate import ATP-binding protein WtpC (wtpC) from Pyrococcus horikoshii (strain ATCC 700860 / DSM 12428 / JCM 9974 / NBRC 100139 / OT-3).